We begin with the raw amino-acid sequence, 260 residues long: Acyl-coenzyme A diphosphatase FITM2 (260 aa).

The Cytoplasmic portion of the chain corresponds to 1–23 (MERLENCAQMFQRRFLNESFRRH). Residues 24–44 (CPVLLACIVLGGSLLKELCPL) traverse the membrane as a helical segment. Topologically, residues 45–57 (PDSYWNNKRNVLN) are lumenal. The chain crosses the membrane as a helical span at residues 58-78 (VYFVKFSWGWTLWLLLPFIAL). The Cytoplasmic segment spans residues 79-93 (TNYKLTRSTTKVLRR). Residues 94–114 (LSSLLVSTLIWYLCTNLFLYI) traverse the membrane as a helical segment. The Lumenal segment spans residues 115-145 (ENITGSCYESEAMSDPKEHQDRRECRLHSGY). Residues 146–166 (WHGFDISGHCFLLSYCILLIL) traverse the membrane as a helical segment. Residue H154 is part of the active site. Residues 167–189 (EETSIISNIRFERHWHRMAINAQ) lie on the Cytoplasmic side of the membrane. Transmembrane regions (helical) follow at residues 190–210 (FAAL…TAVY) and 211–231 (FHNI…WYIT). H212 is a catalytic residue. Topologically, residues 232 to 260 (YRWWYLQPISPGLPPASASRSGKEPIYRN) are cytoplasmic.

The protein belongs to the FIT family. FIT2 subfamily.

It is found in the endoplasmic reticulum membrane. It carries out the reaction an acyl-CoA + H2O = an acyl-4'-phosphopantetheine + adenosine 3',5'-bisphosphate + 2 H(+). Functionally, fatty acyl-coenzyme A (CoA) diphosphatase that hydrolyzes fatty acyl-CoA to yield acyl-4'-phosphopantetheine and adenosine 3',5'-bisphosphate. Preferentially hydrolyzes unsaturated long-chain acyl-CoA substrates in the endoplasmic reticulum (ER) lumen. This catalytic activity is required for maintaining ER structure and for lipid droplets (LDs) biogenesis, which are lipid storage organelles involved in maintaining lipid and energy homeostasis. May directly bind to diacylglycerol (DAGs) and triacylglycerol, which is also important for LD biogenesis. May support directional budding of nacent LDs from the ER into the cytosol by reducing DAG levels at sites of LD formation. May play a role in the regulation of cell morphology, ER morphology and cytoskeletal organization. The polypeptide is Acyl-coenzyme A diphosphatase FITM2 (Xenopus tropicalis (Western clawed frog)).